Here is a 66-residue protein sequence, read N- to C-terminus: Alpha-like toxin BmK-M7 (66 aa).

An LCN-type CS-alpha/beta domain is found at 2-64; it reads RDGYIALPHN…VPIRVPGRCH (63 aa). Cystine bridges form between Cys12–Cys63, Cys16–Cys36, Cys22–Cys46, and Cys26–Cys48.

It belongs to the long (4 C-C) scorpion toxin superfamily. Sodium channel inhibitor family. Alpha subfamily. In terms of tissue distribution, expressed by the venom gland.

The protein localises to the secreted. Its function is as follows. Alpha toxins bind voltage-independently at site-3 of sodium channels (Nav) and inhibit the inactivation of the activated channels, thereby blocking neuronal transmission. This toxin is active on both mammals and insects. It can be considered as a cardiotoxin, as it can bind to human cardiac sodium channel and modify its normal properties. The polypeptide is Alpha-like toxin BmK-M7 (Olivierus martensii (Manchurian scorpion)).